The primary structure comprises 681 residues: Methionine--tRNA ligase (681 aa).

The 'HIGH' region motif lies at 14–24 (PYANGSIHLGH). The Zn(2+) site is built by cysteine 145, cysteine 148, cysteine 158, and cysteine 161. The 'KMSKS' region motif lies at 331–335 (KMSKS). Position 334 (lysine 334) interacts with ATP. The region spanning 579–681 (AFAAVDLRIA…AGAKPGQRVH (103 aa)) is the tRNA-binding domain.

This sequence belongs to the class-I aminoacyl-tRNA synthetase family. MetG type 1 subfamily. As to quaternary structure, homodimer. Zn(2+) is required as a cofactor.

It is found in the cytoplasm. The enzyme catalyses tRNA(Met) + L-methionine + ATP = L-methionyl-tRNA(Met) + AMP + diphosphate. Its function is as follows. Is required not only for elongation of protein synthesis but also for the initiation of all mRNA translation through initiator tRNA(fMet) aminoacylation. The sequence is that of Methionine--tRNA ligase from Azotobacter vinelandii (strain DJ / ATCC BAA-1303).